The sequence spans 135 residues: DNA-binding protein inhibitor ID-2-B (135 aa).

One can recognise a bHLH domain in the interval 23–75; sequence ARSKAPVDEPMSLLYNMNDCYSKLKELVPSIPPNKKVSKMEILQHVIDYILDL. A Nuclear export signal motif is present at residues 108–117; sequence LNTDISILSL.

Heterodimer with other HLH proteins.

The protein resides in the cytoplasm. It localises to the nucleus. In terms of biological role, transcriptional regulator (lacking a basic DNA binding domain) which negatively regulates the basic helix-loop-helix (bHLH) transcription factors by forming heterodimers and inhibiting their DNA binding and transcriptional activity. Inhibits the activity of both neurogenic (neurod1/neuroD) and myogenic (myod1/myoD) bHLH factors. May play a role in the regulation of the circadian clock. This is DNA-binding protein inhibitor ID-2-B (id2-b) from Xenopus laevis (African clawed frog).